Reading from the N-terminus, the 603-residue chain is Aspartate--tRNA(Asp/Asn) ligase (603 aa).

Residue glutamate 172 coordinates L-aspartate. The aspartate stretch occupies residues 196 to 199 (QLFK). Arginine 218 contacts L-aspartate. ATP-binding positions include 218 to 220 (RDE) and glutamine 227. L-aspartate is bound at residue histidine 457. Residue glutamate 491 participates in ATP binding. An L-aspartate-binding site is contributed by arginine 498. Residue 543-546 (GLDR) coordinates ATP.

The protein belongs to the class-II aminoacyl-tRNA synthetase family. Type 1 subfamily. In terms of assembly, homodimer.

The protein localises to the cytoplasm. The catalysed reaction is tRNA(Asx) + L-aspartate + ATP = L-aspartyl-tRNA(Asx) + AMP + diphosphate. In terms of biological role, aspartyl-tRNA synthetase with relaxed tRNA specificity since it is able to aspartylate not only its cognate tRNA(Asp) but also tRNA(Asn). Reaction proceeds in two steps: L-aspartate is first activated by ATP to form Asp-AMP and then transferred to the acceptor end of tRNA(Asp/Asn). The chain is Aspartate--tRNA(Asp/Asn) ligase from Laribacter hongkongensis (strain HLHK9).